A 513-amino-acid chain; its full sequence is Chromosomal replication initiator protein DnaA (513 aa).

The tract at residues 1 to 87 is domain I, interacts with DnaA modulators; it reads MSVELWQQCV…IGSKRSSAPR (87 aa). Residues 87 to 176 form a domain II region; the sequence is RAAPNAPLAA…QVEGALKHTS (90 aa). The tract at residues 113–163 is disordered; sequence AAPAPAPAPTSAPAKKAAAQKAAEVSEEPSRDSFDPMAGASSQQAPVRAEQ. Residues 123–135 show a composition bias toward low complexity; that stretch reads SAPAKKAAAQKAA. Residues 177-393 form a domain III, AAA+ region region; that stretch reads YLNRTFTFEN…GALKRVIAHS (217 aa). Positions 221, 223, 224, and 225 each coordinate ATP. Residues 394-513 are domain IV, binds dsDNA; that stretch reads HFMGRDITIE…YKNLLRTLTT (120 aa).

Belongs to the DnaA family. In terms of assembly, oligomerizes as a right-handed, spiral filament on DNA at oriC.

The protein localises to the cytoplasm. Its function is as follows. Plays an essential role in the initiation and regulation of chromosomal replication. ATP-DnaA binds to the origin of replication (oriC) to initiate formation of the DNA replication initiation complex once per cell cycle. Binds the DnaA box (a 9 base pair repeat at the origin) and separates the double-stranded (ds)DNA. Forms a right-handed helical filament on oriC DNA; dsDNA binds to the exterior of the filament while single-stranded (ss)DNA is stabiized in the filament's interior. The ATP-DnaA-oriC complex binds and stabilizes one strand of the AT-rich DNA unwinding element (DUE), permitting loading of DNA polymerase. After initiation quickly degrades to an ADP-DnaA complex that is not apt for DNA replication. Binds acidic phospholipids. The polypeptide is Chromosomal replication initiator protein DnaA (Pseudomonas fluorescens (strain ATCC BAA-477 / NRRL B-23932 / Pf-5)).